A 1694-amino-acid chain; its full sequence is MECLDFSKLWFSTAAGLQQRCYYDCVAWECLGDDDLQIFISGLNRLIESVAVSCTGDEDLDFVVDSCNEFVTGRDLKSFFAADLPVREVSSVGCISHFIPGSVSGLNVSDLLDNQLYGCSVFSSDFESKLRDIRDAALSDAASGVSQLVSCHFEKDVRHLLAENANSVKIPVPQKLSDDDMRILRDHFPRYELKFTQNVDGPHNMAAAHRLLETHDLLSNFPADAPILDIGGNWFSHFRYGRSNVHSCCPMLDLRDNERHTHRLTMTESLMSSLRHRYAGTIDLDPDAHLSRKVSDSMKEFYKRWAVHPKDLIRLYAGIRDGNSSLYCHHKFGVSWNDVLWESERNNCLTVPEPECPFKAKYAIMVHSGYDLPLKELIGGMVQHGVVELHGTMIADPAMLVATSGYIPALRCNWEKSKGQIWFSFRDDSTMGYRHDWEVYSKYLTSTVVSCGKHFYVMERDKYRHGVLFYSIIKCSGSLRKGDHTFFHNAWFHEMYDKYIMKVPLVKVKDLTGDEGSVECSWREVVMSRKLVDRVIEVCLRGVKPINFGNCDDAVHMDNLRIIQNHLLSHSQTLVLNGSTIIREEAIPFKDFSPVSVTIYFEILLTRYKESLSLAWFHAGLGPDFKLGSWVSSLKRVFYRILGFPANLLKYVLNALFRCRDKVSDMEFVKPAVEKLTVLENTYIGKSLMGDCPTLKEYDDSAFFNILENVGNELFNNSSTDSGKPETPEVTMTGNPNAVIAEAISYCRAEVDRIGKKCERILHAYQATGNCGGYLNDTDNVGVFDKMTSWVQKPKEFDHEFGWDGSSFIKLSWFGKIPDFVGRYLVVTDGTRVTTNLKFSRQYATIPATVTPTIKLVDGVTGCGKTTEIVRRYRPGILILSVCKANVDEIRRKLAAVDSKFIRTVDSYLLSPSVTGSCDELFIDEYGLSHPGILLLAIHISGIRKVTLFGDSEQIPFCNRLADFPLKYNSVEDVGLNFDREIRSTTYRCPQDITLSLQKMYKTKPIKTVSTVESSITIKPIKSEFEIPLPNAFDGPVLYICMTKHDESLLKLRWAKENISSEVRTVHAAQGLSYKNVVYFRLTRTDNDLYTKRKLPYHLVAISRHTDKIVYCTTKPEDSSDFSLSALKNTIKTSRDLTQEASGSESSYAVVFESNSEVTATKPEVCENVRKAAEMNFPVSSDALYQKEVPIYGAIPDPKGKASYNPGSVIRAIEELTPGNTSIDTDALDELVEVGPMSLQVGSIRWDVSKISPRLFTNNKFAVPHLPTGALLRRNTSSRQVGLAIEKRNANVMNSQKYFDLENLANKAVERFFDFFIDMEKFSKLPTGVLGSSAEQIQTYQNKTGNKVTDPVCVALSPIQKYKHMIKRDVKFNLTDGAQSEYTKAATITYHQPEITQVATAIFGQFKTRLLACRNKFLNIPLEHDNDLSGYLTKYHLGSENNTFTEIDFSKFDKSQGEIHQLIQDLILIKFGCDPEFVALWSTAHRSSSIFDQNVGIGFKTDFQRRTGDAFTFLGNSLVTAAMLAFVISDPDREKIRYMLVGGDDSLICSYGPIQVPLEPLGDIFNMSCKLVQPACPYFASRYLIRRGDEILCVPDPYKLLVKLGRKDVPDNQASLCEIRTGLADSAKYIFDDIVKQKLAILVQVRYNKAAPSLYDALCTVHWALSSNTNFSKFYTVTNTSNEVRRNRRGVKIT.

The 251-residue stretch at 194–444 (KFTQNVDGPH…HDWEVYSKYL (251 aa)) folds into the Alphavirus-like MT domain. One can recognise a (+)RNA virus helicase ATP-binding domain in the interval 829-983 (DGTRVTTNLK…VGLNFDREIR (155 aa)). The 162-residue stretch at 984–1145 (STTYRCPQDI…DLTQEASGSE (162 aa)) folds into the (+)RNA virus helicase C-terminal domain. The RdRp catalytic domain occupies 1442–1558 (NTFTEIDFSK…CSYGPIQVPL (117 aa)).

The protein belongs to the ssRNA positive-strand viruses RNA-directed RNA polymerase family.

It carries out the reaction ATP + H2O = ADP + phosphate + H(+). The catalysed reaction is RNA(n) + a ribonucleoside 5'-triphosphate = RNA(n+1) + diphosphate. Its function is as follows. RNA-dependent RNA polymerase replicates the viral genome. The chain is Methyltransferase/helicase/RNA-directed RNA polymerase from Rubus idaeus (Raspberry).